A 128-amino-acid polypeptide reads, in one-letter code: Prokineticin-2 (128 aa).

A signal peptide spans 1–27; it reads MRSSRCARLLLLLLLPPLLLTPPAGDA. Disulfide bonds link C34–C46, C40–C58, C45–C106, C68–C114, and C108–C124. Positions 71 to 95 are disordered; that stretch reads MTRKNHFGNGRQERRKRKRRRKKKV. The segment covering 83–95 has biased composition (basic residues); it reads ERRKRKRRRKKKV.

It belongs to the AVIT (prokineticin) family.

Its subcellular location is the secreted. In terms of biological role, may function as an output molecule from the suprachiasmatic nucleus (SCN) that transmits behavioral circadian rhythm. May also function locally within the SCN to synchronize output. Potently contracts gastrointestinal (GI) smooth muscle. The chain is Prokineticin-2 (PROK2) from Bos taurus (Bovine).